We begin with the raw amino-acid sequence, 1136 residues long: Protein stu-1 (1136 aa).

2 HEAT repeats span residues 95–133 (TLPV…ERSV) and 167–205 (YVPT…KSDL). 3 disordered regions span residues 524–554 (KDPH…MGAP), 567–794 (RAMA…QPQI), and 821–884 (TAGQ…LLDS). A compositionally biased stretch (low complexity) spans 595 to 622 (VSSTSQASVASASTASAVPAPTKSAFGA). Residues 659 to 668 (PAEPASPPSK) show a composition bias toward pro residues. Over residues 673–683 (TVTSPKTQTLV) the composition is skewed to polar residues. Over residues 701 to 716 (SSESGIPIPVSGISSP) the composition is skewed to low complexity. Polar residues-rich tracts occupy residues 777–793 (LPTQ…QQPQ) and 822–833 (AGQTQPQSTYTS).

This sequence belongs to the CLASP family. Interacts with microtubules.

It localises to the nucleus. The protein localises to the cytoplasm. Its subcellular location is the cytoskeleton. It is found in the spindle. Functionally, microtubule binding protein that promotes the stabilization of dynamic microtubules. Required for mitotic spindle formation. The polypeptide is Protein stu-1 (stu-1) (Neurospora crassa (strain ATCC 24698 / 74-OR23-1A / CBS 708.71 / DSM 1257 / FGSC 987)).